The following is a 485-amino-acid chain: Glycogen synthase (485 aa).

Lys15 serves as a coordination point for ADP-alpha-D-glucose.

This sequence belongs to the glycosyltransferase 1 family. Bacterial/plant glycogen synthase subfamily.

The enzyme catalyses [(1-&gt;4)-alpha-D-glucosyl](n) + ADP-alpha-D-glucose = [(1-&gt;4)-alpha-D-glucosyl](n+1) + ADP + H(+). The protein operates within glycan biosynthesis; glycogen biosynthesis. Synthesizes alpha-1,4-glucan chains using ADP-glucose. The sequence is that of Glycogen synthase from Francisella philomiragia subsp. philomiragia (strain ATCC 25017 / CCUG 19701 / FSC 153 / O#319-036).